The chain runs to 364 residues: DNA replication and repair protein RecF (364 aa).

Position 30–37 (G30–T37) interacts with ATP.

This sequence belongs to the RecF family.

It is found in the cytoplasm. In terms of biological role, the RecF protein is involved in DNA metabolism; it is required for DNA replication and normal SOS inducibility. RecF binds preferentially to single-stranded, linear DNA. It also seems to bind ATP. This Pelotomaculum thermopropionicum (strain DSM 13744 / JCM 10971 / SI) protein is DNA replication and repair protein RecF.